Consider the following 503-residue polypeptide: Maturase K (503 aa).

It belongs to the intron maturase 2 family. MatK subfamily.

The protein localises to the plastid. It is found in the chloroplast. Functionally, usually encoded in the trnK tRNA gene intron. Probably assists in splicing its own and other chloroplast group II introns. In Rosa gigantea (Giant tea rose), this protein is Maturase K.